Consider the following 214-residue polypeptide: Pyridoxine/pyridoxamine 5'-phosphate oxidase (214 aa).

Substrate contacts are provided by residues 9-12 (RKDY) and Lys-67. FMN-binding positions include 62–67 (RMVLLK), 77–78 (FT), Arg-83, Lys-84, and Gln-106. The substrate site is built by Tyr-124, Arg-128, and Ser-132. Residues 141-142 (QS) and Trp-186 contribute to the FMN site. Substrate is bound at residue 192–194 (RLH). Arg-196 lines the FMN pocket.

This sequence belongs to the pyridoxamine 5'-phosphate oxidase family. As to quaternary structure, homodimer. FMN is required as a cofactor.

It catalyses the reaction pyridoxamine 5'-phosphate + O2 + H2O = pyridoxal 5'-phosphate + H2O2 + NH4(+). It carries out the reaction pyridoxine 5'-phosphate + O2 = pyridoxal 5'-phosphate + H2O2. Its pathway is cofactor metabolism; pyridoxal 5'-phosphate salvage; pyridoxal 5'-phosphate from pyridoxamine 5'-phosphate: step 1/1. It functions in the pathway cofactor metabolism; pyridoxal 5'-phosphate salvage; pyridoxal 5'-phosphate from pyridoxine 5'-phosphate: step 1/1. Its function is as follows. Catalyzes the oxidation of either pyridoxine 5'-phosphate (PNP) or pyridoxamine 5'-phosphate (PMP) into pyridoxal 5'-phosphate (PLP). The protein is Pyridoxine/pyridoxamine 5'-phosphate oxidase of Nostoc punctiforme (strain ATCC 29133 / PCC 73102).